The following is a 401-amino-acid chain: All trans-polyprenyl-diphosphate synthase PDSS2 (401 aa).

This sequence belongs to the FPP/GGPP synthase family. Heterotetramer composed of 2 PDSS1/DPS1 and 2 PDSS2/DLP1 subunits.

It is found in the mitochondrion. It catalyses the reaction 7 isopentenyl diphosphate + (2E,6E)-farnesyl diphosphate = all-trans-decaprenyl diphosphate + 7 diphosphate. The catalysed reaction is 6 isopentenyl diphosphate + (2E,6E)-farnesyl diphosphate = all-trans-nonaprenyl diphosphate + 6 diphosphate. It participates in cofactor biosynthesis; ubiquinone biosynthesis. Its function is as follows. Heterotetrameric enzyme that catalyzes the condensation of farnesyl diphosphate (FPP), which acts as a primer, and isopentenyl diphosphate (IPP) to produce prenyl diphosphates of varying chain lengths and participates in the determination of the side chain of ubiquinone. Supplies nona and decaprenyl diphosphate, the precursors for the side chain of the isoprenoid quinones ubiquinone-9 (Q9) and ubiquinone-10 (Q10) respectively. The enzyme adds isopentenyl diphosphate molecules sequentially to farnesyl diphosphate with trans stereochemistry. May play a role during cerebellar development. May regulate mitochondrial respiratory chain function. The protein is All trans-polyprenyl-diphosphate synthase PDSS2 of Mus musculus (Mouse).